The chain runs to 280 residues: Proteasome subunit beta (280 aa).

Positions 1-53 are cleaved as a propeptide — removed in mature form; by autocatalysis; that stretch reads MSEYSAGRSGFSPAYLDRVGSSFTDFLAAAAPHLLPGSRPVPQIPVGNVTPHG. The Nucleophile role is filled by T54.

This sequence belongs to the peptidase T1B family. As to quaternary structure, the 20S proteasome core is composed of 14 alpha and 14 beta subunits that assemble into four stacked heptameric rings, resulting in a barrel-shaped structure. The two inner rings, each composed of seven catalytic beta subunits, are sandwiched by two outer rings, each composed of seven alpha subunits. The catalytic chamber with the active sites is on the inside of the barrel. Has a gated structure, the ends of the cylinder being occluded by the N-termini of the alpha-subunits. Is capped by the proteasome-associated ATPase, ARC.

Its subcellular location is the cytoplasm. It carries out the reaction Cleavage of peptide bonds with very broad specificity.. The protein operates within protein degradation; proteasomal Pup-dependent pathway. The formation of the proteasomal ATPase ARC-20S proteasome complex, likely via the docking of the C-termini of ARC into the intersubunit pockets in the alpha-rings, may trigger opening of the gate for substrate entry. Interconversion between the open-gate and close-gate conformations leads to a dynamic regulation of the 20S proteasome proteolysis activity. In terms of biological role, component of the proteasome core, a large protease complex with broad specificity involved in protein degradation. This is Proteasome subunit beta from Geodermatophilus obscurus (strain ATCC 25078 / DSM 43160 / JCM 3152 / CCUG 61914 / KCC A-0152 / KCTC 9177 / NBRC 13315 / NRRL B-3577 / G-20).